Consider the following 212-residue polypeptide: uncharacterized protein (212 aa).

S-adenosyl-L-methionine-binding residues include G53, E74, and D97.

The protein belongs to the methyltransferase superfamily. YrrT family.

Could be a S-adenosyl-L-methionine-dependent methyltransferase. This is an uncharacterized protein from Bacillus cereus (strain ATCC 10987 / NRS 248).